The primary structure comprises 512 residues: Histidine ammonia-lyase (512 aa).

The segment at residues 142-144 is a cross-link (5-imidazolinone (Ala-Gly)); sequence ASG. Ser-143 carries the post-translational modification 2,3-didehydroalanine (Ser).

This sequence belongs to the PAL/histidase family. Contains an active site 4-methylidene-imidazol-5-one (MIO), which is formed autocatalytically by cyclization and dehydration of residues Ala-Ser-Gly.

The protein localises to the cytoplasm. The enzyme catalyses L-histidine = trans-urocanate + NH4(+). It functions in the pathway amino-acid degradation; L-histidine degradation into L-glutamate; N-formimidoyl-L-glutamate from L-histidine: step 1/3. This Bartonella henselae (strain ATCC 49882 / DSM 28221 / CCUG 30454 / Houston 1) (Rochalimaea henselae) protein is Histidine ammonia-lyase.